A 940-amino-acid polypeptide reads, in one-letter code: MIMIRIWNNYKGKYRFFLSNCRSFSSIKRPQIPESEETSLSITQRRFDPDLAPIKTRVYVSLFHTLFRLYLSCERLYGAARTLSAMCTFGVVPDSRLWNSLIHQFNVNGLVHDQVSLIYSKMIACGVSPDVFALNVLIHSFCKVGRLSFAISLLRNRVISIDTVTYNTVISGLCEHGLADEAYQFLSEMVKMGILPDTVSYNTLIDGFCKVGNFVRAKALVDEISELNLITHTILLSSYYNLHAIEEAYRDMVMSGFDPDVVTFSSIINRLCKGGKVLEGGLLLREMEEMSVYPNHVTYTTLVDSLFKANIYRHALALYSQMVVRGIPVDLVVYTVLMDGLFKAGDLREAEKTFKMLLEDNQVPNVVTYTALVDGLCKAGDLSSAEFIITQMLEKSVIPNVVTYSSMINGYVKKGMLEEAVSLLRKMEDQNVVPNGFTYGTVIDGLFKAGKEEMAIELSKEMRLIGVEENNYILDALVNHLKRIGRIKEVKGLVKDMVSKGVTLDQINYTSLIDVFFKGGDEEAALAWAEEMQERGMPWDVVSYNVLISGMLKFGKVGADWAYKGMREKGIEPDIATFNIMMNSQRKQGDSEGILKLWDKMKSCGIKPSLMSCNIVVGMLCENGKMEEAIHILNQMMLMEIHPNLTTYRIFLDTSSKHKRADAIFKTHETLLSYGIKLSRQVYNTLIATLCKLGMTKKAAMVMGDMEARGFIPDTVTFNSLMHGYFVGSHVRKALSTYSVMMEAGISPNVATYNTIIRGLSDAGLIKEVDKWLSEMKSRGMRPDDFTYNALISGQAKIGNMKGSMTIYCEMIADGLVPKTSTYNVLISEFANVGKMLQARELLKEMGKRGVSPNTSTYCTMISGLCKLCTHPDVEWNKKAMYLAEAKGLLKEMVEEKGYIPCNQTIYWISAAFSKPGMKVDAERFLKECYKKKNARSSNS.

The transit peptide at 1–24 directs the protein to the mitochondrion; it reads MIMIRIWNNYKGKYRFFLSNCRSF. PPR repeat units follow at residues 59 to 93, 94 to 129, 130 to 161, 162 to 196, 197 to 231, 241 to 259, 260 to 294, 295 to 329, 330 to 364, 365 to 399, 400 to 434, 435 to 469, 470 to 504, 505 to 539, 540 to 573, 574 to 608, 609 to 643, 644 to 678, 679 to 713, 714 to 748, 749 to 783, 784 to 818, 819 to 853, and 854 to 891; these read YVSL…GVVP, DSRL…GVSP, DVFA…VISI, DTVT…GILP, DTVS…NLIT, NLHA…GFDP, DVVT…SVYP, NHVT…GIPV, DLVV…NQVP, NVVT…SVIP, NVVT…NVVP, NGFT…GVEE, NNYI…GVTL, DQIN…GMPW, DVVS…GIEP, DIAT…GIKP, SLMS…EIHP, NLTT…GIKL, SRQV…GFIP, DTVT…GISP, NVAT…GMRP, DDFT…GLVP, KTST…GVSP, and NTST…GLLK.

The protein belongs to the PPR family. P subfamily.

The protein localises to the mitochondrion. This is Pentatricopeptide repeat-containing protein At5g14770, mitochondrial from Arabidopsis thaliana (Mouse-ear cress).